Consider the following 230-residue polypeptide: Large ribosomal subunit protein uL1 (230 aa).

It belongs to the universal ribosomal protein uL1 family. As to quaternary structure, part of the 50S ribosomal subunit.

Functionally, binds directly to 23S rRNA. The L1 stalk is quite mobile in the ribosome, and is involved in E site tRNA release. Its function is as follows. Protein L1 is also a translational repressor protein, it controls the translation of the L11 operon by binding to its mRNA. In Acidiphilium cryptum (strain JF-5), this protein is Large ribosomal subunit protein uL1.